A 1470-amino-acid polypeptide reads, in one-letter code: RNA-directed RNA polymerase VP1 (1470 aa).

A disordered region spans residues 28-55; sequence AKQDQKENETTSNNKDTSSSVPKPSNFR. Polar residues predominate over residues 37–50; that stretch reads TTSNNKDTSSSVPK.

The enzyme catalyses RNA(n) + a ribonucleoside 5'-triphosphate = RNA(n+1) + diphosphate. Functionally, RNA-directed RNA polymerase that is involved in transcription and genome replication. Following infection, it catalyzes the synthesis of fully conservative plus strands. After core assembly, which consists in recruitment of one capped plus-strand for each genomic segments and polymerase complexes, the polymerase switches mode and catalyzes the synthesis of complementary minus-strands. This chain is RNA-directed RNA polymerase VP1 (S1), found in Saccharum officinarum (Sugarcane).